A 352-amino-acid polypeptide reads, in one-letter code: Histidinol-phosphate aminotransferase (352 aa).

The residue at position 208 (lysine 208) is an N6-(pyridoxal phosphate)lysine.

This sequence belongs to the class-II pyridoxal-phosphate-dependent aminotransferase family. Histidinol-phosphate aminotransferase subfamily. Homodimer. It depends on pyridoxal 5'-phosphate as a cofactor.

The enzyme catalyses L-histidinol phosphate + 2-oxoglutarate = 3-(imidazol-4-yl)-2-oxopropyl phosphate + L-glutamate. It functions in the pathway amino-acid biosynthesis; L-histidine biosynthesis; L-histidine from 5-phospho-alpha-D-ribose 1-diphosphate: step 7/9. The protein is Histidinol-phosphate aminotransferase of Streptococcus sanguinis (strain SK36).